A 116-amino-acid polypeptide reads, in one-letter code: MNLVTTIITITITLSAVLATISFWLPQISPDAEKLSPYECGFDPLGSARLPFSLRFFLIAILFLLFDLEIALLLPLPWGDQLNAPTLTLLWSTAVLALLTLGLIYEWTQGGLEWAE.

Helical transmembrane passes span 3–23 (LVTTIITITITLSAVLATISF), 56–76 (FFLIAILFLLFDLEIALLLPL), and 84–104 (APTLTLLWSTAVLALLTLGLI).

It belongs to the complex I subunit 3 family.

It is found in the mitochondrion membrane. The catalysed reaction is a ubiquinone + NADH + 5 H(+)(in) = a ubiquinol + NAD(+) + 4 H(+)(out). In terms of biological role, core subunit of the mitochondrial membrane respiratory chain NADH dehydrogenase (Complex I) that is believed to belong to the minimal assembly required for catalysis. Complex I functions in the transfer of electrons from NADH to the respiratory chain. The immediate electron acceptor for the enzyme is believed to be ubiquinone. This Oncorhynchus nerka (Sockeye salmon) protein is NADH-ubiquinone oxidoreductase chain 3 (MT-ND3).